Here is a 238-residue protein sequence, read N- to C-terminus: MGKVLSSSKEAAKLIHDGDTLIAGGFGLCGIPEQLILSIRDQGVKDLTVVSNNCGVDDWGLGLLLANKQIKKMIASYVGENKIFERQFLSGELEVELVPQGTLAERIRAGGAGIPGFYTATGVGTSIAEGKEHKTFGGRTYVLERGITGDVAIVKAWKADTMGNLIFRKTARNFNPIAAMAGKITIAEAEEIVEAGELDPDHIHTPGIYVQHVVLGASQEKRIEKRTVQQASGKGEAK.

A CoA-binding site is contributed by 24–30 (GGFGLCG).

This sequence belongs to the 3-oxoacid CoA-transferase subunit A family. As to quaternary structure, heterodimer of a subunit A and a subunit B.

The catalysed reaction is a 3-oxo acid + succinyl-CoA = a 3-oxoacyl-CoA + succinate. This Bacillus subtilis (strain 168) protein is Probable succinyl-CoA:3-ketoacid coenzyme A transferase subunit A (scoA).